Here is a 208-residue protein sequence, read N- to C-terminus: N-(5'-phosphoribosyl)anthranilate isomerase (208 aa).

The protein belongs to the TrpF family.

It catalyses the reaction N-(5-phospho-beta-D-ribosyl)anthranilate = 1-(2-carboxyphenylamino)-1-deoxy-D-ribulose 5-phosphate. It participates in amino-acid biosynthesis; L-tryptophan biosynthesis; L-tryptophan from chorismate: step 3/5. The sequence is that of N-(5'-phosphoribosyl)anthranilate isomerase from Methanococcus maripaludis (strain C7 / ATCC BAA-1331).